We begin with the raw amino-acid sequence, 1407 residues long: DNA-directed RNA polymerase subunit beta' (1407 aa).

Zn(2+) is bound by residues cysteine 70, cysteine 72, cysteine 85, and cysteine 88. Mg(2+) is bound by residues aspartate 460, aspartate 462, and aspartate 464. Zn(2+) is bound by residues cysteine 814, cysteine 889, cysteine 896, and cysteine 899. A disordered region spans residues 1384 to 1407; that stretch reads LVGRSTSSGTEVTSPSKDAIPLGG. Positions 1386 to 1399 are enriched in polar residues; the sequence is GRSTSSGTEVTSPS.

This sequence belongs to the RNA polymerase beta' chain family. The RNAP catalytic core consists of 2 alpha, 1 beta, 1 beta' and 1 omega subunit. When a sigma factor is associated with the core the holoenzyme is formed, which can initiate transcription. The cofactor is Mg(2+). Zn(2+) is required as a cofactor.

The enzyme catalyses RNA(n) + a ribonucleoside 5'-triphosphate = RNA(n+1) + diphosphate. Functionally, DNA-dependent RNA polymerase catalyzes the transcription of DNA into RNA using the four ribonucleoside triphosphates as substrates. This chain is DNA-directed RNA polymerase subunit beta', found in Xylella fastidiosa (strain Temecula1 / ATCC 700964).